The primary structure comprises 152 residues: Transcriptional regulator MraZ (152 aa).

SpoVT-AbrB domains lie at 5–52 (ANAV…PLPE) and 81–124 (AVDL…NEDA).

It belongs to the MraZ family. As to quaternary structure, forms oligomers.

The protein resides in the cytoplasm. It localises to the nucleoid. The sequence is that of Transcriptional regulator MraZ from Azotobacter vinelandii (strain DJ / ATCC BAA-1303).